The chain runs to 355 residues: Probable butyrate kinase (355 aa).

Belongs to the acetokinase family.

It localises to the cytoplasm. The enzyme catalyses butanoate + ATP = butanoyl phosphate + ADP. In Listeria monocytogenes serotype 4a (strain HCC23), this protein is Probable butyrate kinase.